An 820-amino-acid polypeptide reads, in one-letter code: Mitogen-activated protein kinase kinase kinase kinase 2 (820 aa).

The 258-residue stretch at 16–273 folds into the Protein kinase domain; it reads FELLQRVGAG…AEKLLQHPFT (258 aa). Residues 22 to 30 and lysine 45 contribute to the ATP site; that span reads VGAGTYGDV. Aspartate 136 (proton acceptor) is an active-site residue. The PEST1 stretch occupies residues 294–314; sequence LGTPSPEDCELETYDMFPDTI. Serine 328 carries the phosphoserine modification. The tract at residues 344-360 is PEST2; sequence ETDPLNEPWEEEWTLLG. Residues 387–442 form a disordered region; that stretch reads SEFQELDSPDDTMGTIKRAPFLGPLPTDPPAEEPLSSPPGTLPPPPSGPNSSPLLP. Position 394 is a phosphoserine (serine 394). Residues 405 to 448 are PEST3; that stretch reads APFLGPLPTDPPAEEPLSSPPGTLPPPPSGPNSSPLLPTAWATM. Pro residues predominate over residues 422-434; the sequence is SSPPGTLPPPPSG. Positions 482-793 constitute a CNH domain; sequence PLRIHAAVTW…IFRVLGAHRD (312 aa).

This sequence belongs to the protein kinase superfamily. STE Ser/Thr protein kinase family. STE20 subfamily. Interacts with TRAF2, TRAF6, MAP3K1/MEKK1 and MAP3K11/MLK3. Interacts with RAB8A. It depends on Mg(2+) as a cofactor. Polyubiquitinated through 'Lys-48'-polyubiquitin chains, allowing proteasomal turnover. Ubiquitination requires the kinase activity of MAP4K2/GCK. In terms of processing, autophosphorylated in response to tumor necrosis factor (TNF), endotoxins or pro-inflammatory stimuli. Autophosphorylation leads to activation. As to expression, highly expressed in germinal center but not mantle zone B-cells. Also expressed in lung, brain and placenta and at lower levels in other tissues examined.

The protein resides in the cytoplasm. The protein localises to the basolateral cell membrane. It is found in the golgi apparatus membrane. The catalysed reaction is L-seryl-[protein] + ATP = O-phospho-L-seryl-[protein] + ADP + H(+). The enzyme catalyses L-threonyl-[protein] + ATP = O-phospho-L-threonyl-[protein] + ADP + H(+). The tumor necrosis factor (TNF), as well as endotoxins and pro-inflammatory stimuli such as polyinosine-polycytidine (poly(IC)), lipopolysaccharides (LPS), peptidoglycan (PGN), flagellin, or lipid A activate MAP4K2 by promoting its autophosphorylation. Its function is as follows. Serine/threonine-protein kinase which acts as an essential component of the MAP kinase signal transduction pathway. Acts as a MAPK kinase kinase kinase (MAP4K) and is an upstream activator of the stress-activated protein kinase/c-Jun N-terminal kinase (SAP/JNK) signaling pathway and to a lesser extent of the p38 MAPKs signaling pathway. Required for the efficient activation of JNKs by TRAF6-dependent stimuli, including pathogen-associated molecular patterns (PAMPs) such as polyinosine-polycytidine (poly(IC)), lipopolysaccharides (LPS), lipid A, peptidoglycan (PGN), or bacterial flagellin. To a lesser degree, IL-1 and engagement of CD40 also stimulate MAP4K2-mediated JNKs activation. The requirement for MAP4K2/GCK is most pronounced for LPS signaling, and extends to LPS stimulation of c-Jun phosphorylation and induction of IL-8. Enhances MAP3K1 oligomerization, which may relieve N-terminal mediated MAP3K1 autoinhibition and lead to activation following autophosphorylation. Also mediates the SAP/JNK signaling pathway and the p38 MAPKs signaling pathway through activation of the MAP3Ks MAP3K10/MLK2 and MAP3K11/MLK3. May play a role in the regulation of vesicle targeting or fusion. regulation of vesicle targeting or fusion. Activator of the Hippo signaling pathway which plays a pivotal role in organ size control and tumor suppression by restricting proliferation and promoting apoptosis. MAP4Ks act in parallel to and are partially redundant with STK3/MST2 and STK4/MST2 in the phosphorylation and activation of LATS1/2, and establish MAP4Ks as components of the expanded Hippo pathway. The polypeptide is Mitogen-activated protein kinase kinase kinase kinase 2 (Homo sapiens (Human)).